The sequence spans 131 residues: Small ribosomal subunit protein uS12 (131 aa).

Position 89 is a 3-methylthioaspartic acid (Asp-89).

The protein belongs to the universal ribosomal protein uS12 family. In terms of assembly, part of the 30S ribosomal subunit. Contacts proteins S8 and S17. May interact with IF1 in the 30S initiation complex.

Its function is as follows. With S4 and S5 plays an important role in translational accuracy. Functionally, interacts with and stabilizes bases of the 16S rRNA that are involved in tRNA selection in the A site and with the mRNA backbone. Located at the interface of the 30S and 50S subunits, it traverses the body of the 30S subunit contacting proteins on the other side and probably holding the rRNA structure together. The combined cluster of proteins S8, S12 and S17 appears to hold together the shoulder and platform of the 30S subunit. In Campylobacter concisus (strain 13826), this protein is Small ribosomal subunit protein uS12.